Consider the following 1647-residue polypeptide: Putative RNA exonuclease pqe-1 (1647 aa).

4 disordered regions span residues 1 to 199, 274 to 393, 515 to 619, and 641 to 665; these read MFNG…QVQN, QTPA…TSLP, MMQQ…KPVI, and QVKQ…PTAR. Composition is skewed to low complexity over residues 30–64 and 99–131; these read GPSQ…SGAS and TQPQ…AAAA. The span at 143 to 170 shows a compositional bias: polar residues; the sequence is SREQGNAHQPTAGQIPQSSNQPAQQTHN. 2 stretches are compositionally biased toward low complexity: residues 274 to 297 and 515 to 526; these read QTPA…NPQQ and MMQQQAMQMQMQ. Positions 527–540 are enriched in pro residues; it reads NPPPVHQQPPPQQP. The segment covering 541 to 555 has biased composition (low complexity); it reads PQQQRQKQQRSQPAP. A compositionally biased stretch (basic and acidic residues) spans 592–601; the sequence is SKIEPVDVKP. A compositionally biased stretch (low complexity) spans 650–664; that stretch reads SSTSDATKSDAAPTA. The stretch at 686–726 forms a coiled coil; sequence SAKKFERMKAEAEDKEDMKKKIAALQEALFNIQEERRVEKE. A compositionally biased stretch (polar residues) spans 736 to 756; the sequence is AVPQNQPASSVQIAQVSTSES. The disordered stretch occupies residues 736-1174; it reads AVPQNQPASS…LRNKKHTTEE (439 aa). Over residues 761–772 the composition is skewed to low complexity; it reads TSEAAATETMTS. Acidic residues predominate over residues 783 to 793; sequence TEGEQEEDEDE. Residues 822–833 show a composition bias toward basic and acidic residues; the sequence is RSDEKREKRHVS. Residues 878 to 905 show a composition bias toward acidic residues; it reads DNEDDDADSFVVGDDEPIEYEEEDEDDM. A compositionally biased stretch (low complexity) spans 977 to 992; it reads TPTASSSMSSSTLSYC. A compositionally biased stretch (basic and acidic residues) spans 1018 to 1031; that stretch reads KTREENRERKRLAQ. The segment covering 1038–1054 has biased composition (polar residues); sequence SETTGVRRTLRSTQDNS. 2 stretches are compositionally biased toward basic and acidic residues: residues 1076 to 1088 and 1139 to 1174; these read AKSS…EKQK and NHTE…TTEE. Residues 1142–1187 adopt a coiled-coil conformation; the sequence is EMLDKRNKESEEKRRKDRDELERLRNKKHTTEEEKIKMARLQNALK. The 161-residue stretch at 1477 to 1637 folds into the Exonuclease domain; that stretch reads RVYALDCEMV…IFYGLRNPES (161 aa).

It belongs to the REXO1/REXO3 family. As to expression, expressed in the excretory canal, vulval cells, the intestine and in head and tail neurons including ASH, RIC and AIZ neurons.

The protein resides in the nucleus. Putative RNA exonuclease which protects neurons from the toxic effects of expanded poly-Q disease proteins. It is unknown whether this is via participation in the pathogenic mechanism underlying poly-Q-induced neurodegeneration or if it is by acting as a genetic modifier of the age of onset or progression of neurodegeneration. Regulates gene expression in neurons. The sequence is that of Putative RNA exonuclease pqe-1 from Caenorhabditis elegans.